We begin with the raw amino-acid sequence, 383 residues long: Acetylornithine deacetylase (383 aa).

A Zn(2+)-binding site is contributed by His80. Asp82 is an active-site residue. Asp112 lines the Zn(2+) pocket. The active site involves Glu144. Positions 145, 169, and 355 each coordinate Zn(2+).

The protein belongs to the peptidase M20A family. ArgE subfamily. In terms of assembly, homodimer. It depends on Zn(2+) as a cofactor. Co(2+) is required as a cofactor. The cofactor is glutathione.

It localises to the cytoplasm. It catalyses the reaction N(2)-acetyl-L-ornithine + H2O = L-ornithine + acetate. It participates in amino-acid biosynthesis; L-arginine biosynthesis; L-ornithine from N(2)-acetyl-L-ornithine (linear): step 1/1. In terms of biological role, catalyzes the hydrolysis of the amide bond of N(2)-acetylated L-amino acids. Cleaves the acetyl group from N-acetyl-L-ornithine to form L-ornithine, an intermediate in L-arginine biosynthesis pathway, and a branchpoint in the synthesis of polyamines. The protein is Acetylornithine deacetylase of Salmonella heidelberg (strain SL476).